Consider the following 600-residue polypeptide: Proline--tRNA ligase (600 aa).

This sequence belongs to the class-II aminoacyl-tRNA synthetase family. ProS type 1 subfamily. Homodimer.

It localises to the cytoplasm. The catalysed reaction is tRNA(Pro) + L-proline + ATP = L-prolyl-tRNA(Pro) + AMP + diphosphate. In terms of biological role, catalyzes the attachment of proline to tRNA(Pro) in a two-step reaction: proline is first activated by ATP to form Pro-AMP and then transferred to the acceptor end of tRNA(Pro). As ProRS can inadvertently accommodate and process non-cognate amino acids such as alanine and cysteine, to avoid such errors it has two additional distinct editing activities against alanine. One activity is designated as 'pretransfer' editing and involves the tRNA(Pro)-independent hydrolysis of activated Ala-AMP. The other activity is designated 'posttransfer' editing and involves deacylation of mischarged Ala-tRNA(Pro). The misacylated Cys-tRNA(Pro) is not edited by ProRS. This Gloeothece citriformis (strain PCC 7424) (Cyanothece sp. (strain PCC 7424)) protein is Proline--tRNA ligase.